A 260-amino-acid polypeptide reads, in one-letter code: Ubiquinone/menaquinone biosynthesis C-methyltransferase UbiE (260 aa).

S-adenosyl-L-methionine is bound by residues T83, D104, and 132 to 133 (NA).

The protein belongs to the class I-like SAM-binding methyltransferase superfamily. MenG/UbiE family.

The enzyme catalyses a 2-demethylmenaquinol + S-adenosyl-L-methionine = a menaquinol + S-adenosyl-L-homocysteine + H(+). It carries out the reaction a 2-methoxy-6-(all-trans-polyprenyl)benzene-1,4-diol + S-adenosyl-L-methionine = a 5-methoxy-2-methyl-3-(all-trans-polyprenyl)benzene-1,4-diol + S-adenosyl-L-homocysteine + H(+). It functions in the pathway quinol/quinone metabolism; menaquinone biosynthesis; menaquinol from 1,4-dihydroxy-2-naphthoate: step 2/2. Its pathway is cofactor biosynthesis; ubiquinone biosynthesis. Methyltransferase required for the conversion of demethylmenaquinol (DMKH2) to menaquinol (MKH2) and the conversion of 2-polyprenyl-6-methoxy-1,4-benzoquinol (DDMQH2) to 2-polyprenyl-3-methyl-6-methoxy-1,4-benzoquinol (DMQH2). This is Ubiquinone/menaquinone biosynthesis C-methyltransferase UbiE from Bartonella bacilliformis (strain ATCC 35685 / KC583 / Herrer 020/F12,63).